The chain runs to 328 residues: Arabinose 5-phosphate isomerase KdsD (328 aa).

Positions 42 to 184 constitute an SIS domain; that stretch reads CEKMFWCKGK…AVALLKARGF (143 aa). Substrate is bound by residues 75 to 76, H82, H88, 114 to 123, 148 to 150, T222, and D275; these read GT, ALIPVLKRLH, and KVA. H82 serves as a coordination point for Zn(2+). Positions 210–268 constitute a CBS 1 domain; the sequence is MHTGDEIPHVKKTASLRDALLEVTRKNLGMTVICDDNMMIEGIFTDGDLRRVFDMGVDV. One can recognise a CBS 2 domain in the interval 277–328; that stretch reads MTPGGIRVRPGILAVEALNLMQSRHITSVMVADGDHLLGVLHMHDLLRAGVV.

It belongs to the SIS family. GutQ/KpsF subfamily. In terms of assembly, homotetramer.

The catalysed reaction is D-arabinose 5-phosphate = D-ribulose 5-phosphate. Its pathway is carbohydrate biosynthesis; 3-deoxy-D-manno-octulosonate biosynthesis; 3-deoxy-D-manno-octulosonate from D-ribulose 5-phosphate: step 1/3. It participates in bacterial outer membrane biogenesis; lipopolysaccharide biosynthesis. Its function is as follows. Involved in the biosynthesis of 3-deoxy-D-manno-octulosonate (KDO), a unique 8-carbon sugar component of lipopolysaccharides (LPSs). Catalyzes the reversible aldol-ketol isomerization between D-ribulose 5-phosphate (Ru5P) and D-arabinose 5-phosphate (A5P). The polypeptide is Arabinose 5-phosphate isomerase KdsD (kdsD) (Escherichia coli O157:H7).